The following is a 1002-amino-acid chain: MLRAAAAAAAVFPSRFAAAPAVAAVEEVRSPLLRVLGALRGGRVSTLGRRARFCSNSAGSDSEAAAAEAKAEDAVAAEGEADGKASSAIVPTVLRPEDCLSVIALPLPHRPLFPGFYMPIYVKDQKLLQALVENRKRSIPYAGAFLVKDEEGTDPNIVTSSDSDKSIDDLKGKELLQRLNEVGTLAQITSIQGDQVVLLGHRRLKITEMVQEDPLTVKVDHLKEKPYDKDDDVIKATSFEVISTLREVLKASSLWKDHVQTYTQHMGDFNYPRLADFGAAISGANKFLCQEVLEELDVYKRLKLTLELVKKEMEISKLQQSIAKAIEEKISGDQRRYLLNEQLKAIKKELGLETDDKTALSAKFRERIEAKKEKCPAHVLQVIEEELTKLQLLEASSSEFNVTRNYLDWLTVLPWGNYSDENFDVHHAQQILDEDHYGLSDVKERILEFIAVGKLRGTSQGKIICLSGPPGVGKTSIGRSIARALNRKFYRFSVGGLADVAEIKGHRRTYVGAMPGKMVQCLKSVGTANPLVLIDEIDKLGRGHSGDPASALLELLDPEQNVNFLDHYLDVPIDLSKVLFVCTANVIEMIPNPLLDRMEIIAIAGYITDEKMHIARDYLEKNTREACGIKPEQAEVTDAALLALIESYCREAGVRNLQKQIEKIYRKIALQLVRQGVSNEPTQEAAIVTASEEPNGGDSANKLKDETMEDPATENAAMTNADTASKEASELDLLKRTVDHDVHPAETPKEAVLTDSALSTDKLCTPEGNKDMEGAKEESADKAVEKVVIDSSNLGDYVGKPVFQAERIYEQTPVGVVMGLAWTAMGGSTLYIETTKVEEGDGKGALVLTGQLGDVMKESAQIAHTVGRAILLDKEPENLFFANSKVHLHVPAGSTPKDGPSAGCTMITSMLSLAMGKPVKKDLAMTGEVTLTGRILPIGGVKEKTIAARRSAVKTIVFPAANKRDFDELAPNVKEGLEVHFVDTYNEIFDIAFQSETQTETS.

In terms of domain architecture, Lon N-terminal spans 102–313; sequence VIALPLPHRP…LTLELVKKEM (212 aa). Residue 468–475 participates in ATP binding; the sequence is GPPGVGKT. Residues 811–995 enclose the Lon proteolytic domain; the sequence is QTPVGVVMGL…NEIFDIAFQS (185 aa). Catalysis depends on residues Ser901 and Lys944.

Belongs to the peptidase S16 family. As to quaternary structure, homohexamer or homoheptamer. Organized in a ring with a central cavity.

Its subcellular location is the mitochondrion matrix. The catalysed reaction is Hydrolysis of proteins in presence of ATP.. Its function is as follows. ATP-dependent serine protease that mediates the selective degradation of misfolded, unassembled or oxidatively damaged polypeptides as well as certain short-lived regulatory proteins in the mitochondrial matrix. May also have a chaperone function in the assembly of inner membrane protein complexes. Participates in the regulation of mitochondrial gene expression and in the maintenance of the integrity of the mitochondrial genome. Binds to mitochondrial DNA in a site-specific manner. In Oryza sativa subsp. indica (Rice), this protein is Lon protease homolog, mitochondrial.